Reading from the N-terminus, the 298-residue chain is uncharacterized protein (298 aa).

9 helical membrane passes run 10–30 (VIYTAVSFIMWGLFPLYWKLL), 36–56 (LDILAHRIIWSFVFMCIVLFF), 76–96 (ILSLFLASILISINWFVYIWA), 101–121 (FLLEASLGYYINPLVSVLLGI), 142–162 (GVIISAFQYGSIPYVALLLAF), 179–199 (AIGLTLETFMIMPIALGYLLF), 212–232 (GTWLLLFLAGVFTALPLLLFA), 243–263 (VGILQYIAPTITLLIGLFVYH), and 271–291 (AFTFSCIWAALLLFTFSQVKW). 2 EamA domains span residues 17–148 (FIMW…ISAF) and 162–286 (FSFG…LFTF).

The protein belongs to the EamA transporter family.

Its subcellular location is the cell membrane. This is an uncharacterized protein from Bacillus subtilis (strain 168).